Consider the following 171-residue polypeptide: Envelope protein UL128 (171 aa).

This sequence belongs to the HHV-5 UL128 protein family. In terms of assembly, forms the envelope pentamer complex (PC) composed of gH, gL, UL128, UL130, and UL131A. The pentamer interacts with host NRP2.

It is found in the virion membrane. Functionally, plays a role in viral entry into host cells. Forms a pentameric complex at the surface of the viral envelope together with gH, gL, UL130 and UL131. This complex is required for entry in epithelial, endothelial and myeloid host cells. Mechanistically, engages host receptor(s) including neurophilin 2/NRP2 to mediate infection. Additionally, monomeric UL128 may interfere with certain inflammatory cytokines to increase infection and dissemination by blocking monocytes migration. The polypeptide is Envelope protein UL128 (UL128) (Human cytomegalovirus (strain Merlin) (HHV-5)).